Consider the following 219-residue polypeptide: Adenylate kinase (219 aa).

Residue 12-17 coordinates ATP; the sequence is GAGKGT. The NMP stretch occupies residues 32–61; that stretch reads STGDMLRAAVKAGTPIGLQAKAVMDAGELV. AMP-binding positions include T33, R38, 59 to 61, 87 to 90, and Q94; these read ELV and GYPR. The interval 128–165 is LID; the sequence is GRFSCARCGEGYHDRYKLPKVADICDVCGSKEFKRRPD. R129 provides a ligand contact to ATP. Residues C132, C135, C152, and C155 each contribute to the Zn(2+) site. R162 and R174 together coordinate AMP. An ATP-binding site is contributed by A202.

This sequence belongs to the adenylate kinase family. In terms of assembly, monomer.

The protein localises to the cytoplasm. It carries out the reaction AMP + ATP = 2 ADP. It participates in purine metabolism; AMP biosynthesis via salvage pathway; AMP from ADP: step 1/1. In terms of biological role, catalyzes the reversible transfer of the terminal phosphate group between ATP and AMP. Plays an important role in cellular energy homeostasis and in adenine nucleotide metabolism. The chain is Adenylate kinase from Sphingopyxis alaskensis (strain DSM 13593 / LMG 18877 / RB2256) (Sphingomonas alaskensis).